The chain runs to 203 residues: ATP phosphoribosyltransferase (203 aa).

It belongs to the ATP phosphoribosyltransferase family. Short subfamily. In terms of assembly, heteromultimer composed of HisG and HisZ subunits.

It is found in the cytoplasm. It catalyses the reaction 1-(5-phospho-beta-D-ribosyl)-ATP + diphosphate = 5-phospho-alpha-D-ribose 1-diphosphate + ATP. It participates in amino-acid biosynthesis; L-histidine biosynthesis; L-histidine from 5-phospho-alpha-D-ribose 1-diphosphate: step 1/9. Its function is as follows. Catalyzes the condensation of ATP and 5-phosphoribose 1-diphosphate to form N'-(5'-phosphoribosyl)-ATP (PR-ATP). Has a crucial role in the pathway because the rate of histidine biosynthesis seems to be controlled primarily by regulation of HisG enzymatic activity. This is ATP phosphoribosyltransferase from Campylobacter fetus subsp. fetus (strain 82-40).